The following is an 890-amino-acid chain: Chloroquine resistance transporter (890 aa).

Disordered stretches follow at residues 1–163 (MPPA…EAPL) and 280–300 (GMQR…AAEG). The Cytoplasmic portion of the chain corresponds to 1–349 (MPPAHHGSGG…RATRWIDRNA (349 aa)). Basic residues predominate over residues 8-19 (SGGRRRPGRGNK). 2 stretches are compositionally biased toward low complexity: residues 102-126 (APSQ…SSRS) and 134-156 (SPVA…TSAS). A helical membrane pass occupies residues 350–372 (ATVRVACYTFLLLVTSTGNTICF). Over 373–391 (KKMIDKMPNYSPCLTQVTT) the chain is Vacuolar. A helical transmembrane segment spans residues 392-412 (VVFVPVFFALSLYTDYAGGLP). At 413–422 (QEMADFPKRN) the chain is on the cytoplasmic side. Residues 423–443 (FAVMGFLDSFSGVMAIIGAVH) form a helical membrane-spanning segment. The Vacuolar portion of the chain corresponds to 444–447 (TTGT). Residues 448 to 468 (TQVVLQQSCIVFSLLASIVML) form a helical membrane-spanning segment. Residues 469 to 471 (RKR) lie on the Cytoplasmic side of the membrane. A helical membrane pass occupies residues 472–492 (FHAAHYLGALVIILGVLVVKL). Topologically, residues 493 to 505 (PDLLHPSSDGGGD) are vacuolar. Residues 506-526 (VFVFNLLYLLSNLPTAVSCVY) traverse the membrane as a helical segment. The Cytoplasmic portion of the chain corresponds to 527 to 544 (KEVAFRGVEMGTNYLQAW). A helical membrane pass occupies residues 545 to 565 (VALFQFLIGFLVLPLNALPVL). Residues 566–614 (GPQRVPLAELPASLWNGTRCLFGFNTIVTNCGGAGNMESPCDNCEGAWK) are Vacuolar-facing. N-linked (GlcNAc...) asparagine glycosylation is present at asparagine 581. Intrachain disulfides connect cysteine 585–cysteine 609 and cysteine 596–cysteine 606. A helical membrane pass occupies residues 615–634 (YVGMYLSFNLLYNMFIIFVV). Topologically, residues 635–640 (KSGGAA) are cytoplasmic. A helical membrane pass occupies residues 641–663 (LTFLVSTLRLPVTALAFCSRAIM). The Vacuolar segment spans residues 664 to 673 (GDRAVPPKAT). The chain crosses the membrane as a helical span at residues 674-694 (DFYGLLVLILGLVIYRAGGIM). At 695 to 890 (KRRAQRRAVA…GKSRANNGCI (196 aa)) the chain is on the cytoplasmic side. The segment at 798-871 (AAFTPFTQRM…NRVGGYEPPS (74 aa)) is disordered.

Belongs to the CRT-like transporter family.

It is found in the vacuole membrane. Its function is as follows. Nutrient transporter. Involved in maintaining the osmotic homeostasis of the digestive vacuole. Required for the proper organization of the endolysosomal system and, in turn, indirectly for microneme secretion and parasite invasion. Required for bradyzoite viability and cyst development. The protein is Chloroquine resistance transporter of Toxoplasma gondii.